Consider the following 307-residue polypeptide: Zinc transporter ZIP9 (307 aa).

A helical membrane pass occupies residues 4 to 24; that stretch reads FISISLLSLAMLVGCYVAGII. A glycan (N-linked (GlcNAc...) asparagine) is linked at Asn29. 5 helical membrane passes run 35 to 55, 106 to 126, 146 to 166, 176 to 196, and 210 to 230; these read LKLVTVLGAGLLCGTALAVIV, AYIGVSLVLGFVFMLLVDQIG, ITTTLGLVVHAAADGVALGAA, LIVFVAIMLHKAPAAFGLVSF, and HLLVFALAAPVMSMVTYLGLS. Asn241 is a glycosylation site (N-linked (GlcNAc...) asparagine). Helical transmembrane passes span 244 to 264 and 286 to 306; these read GVAMLFSAGTFLYVATVHVLP and LEVAALVLGCLIPLILSVGHQ.

It belongs to the ZIP transporter (TC 2.A.5) family. Highly expressed in pancreas, testis, and pituitary and moderately in the kidney, liver, uterus, heart, prostate, and brain, whereas expression is lower in the ovary and colon.

It is found in the golgi apparatus. The protein localises to the trans-Golgi network membrane. Its subcellular location is the cell membrane. It localises to the cytoplasm. The protein resides in the perinuclear region. It is found in the mitochondrion. The protein localises to the nucleus. It carries out the reaction Zn(2+)(in) = Zn(2+)(out). Functionally, transports zinc ions across cell and organelle membranes into the cytoplasm and regulates intracellular zinc homeostasis. Participates in the zinc ions efflux out of the secretory compartments. Regulates intracellular zinc level, resulting in the enhancement of AKT1 and MAPK3/MAPK1 (Erk1/2) phosphorylation in response to the BCR activation. Also functions as a membrane androgen receptor that mediates, through a G protein, the non-classical androgen signaling pathway, characterized by the activation of MAPK3/MAPK1 (Erk1/2) and transcription factors CREB1 or ATF1. This pathway contributes to CLDN1 and CLDN5 expression and tight junction formation between adjacent Sertoli cells. Mediates androgen-induced vascular endothelial cell proliferation through activation of an inhibitory G protein leading to the AKT1 and MAPK3/MAPK1 (Erk1/2) activation which in turn modulate inhibition (phosphorylation) of GSK3B and CCND1 transcription. Moreover, has dual functions as a membrane-bound androgen receptor and as an androgen-dependent zinc transporter both of which are mediated through an inhibitory G protein (Gi) that mediates both MAP kinase and zinc signaling leading to the androgen-dependent apoptotic process. The chain is Zinc transporter ZIP9 from Homo sapiens (Human).